The sequence spans 162 residues: Protein FAM167B (162 aa).

This sequence belongs to the FAM167 (SEC) family.

This is Protein FAM167B (Fam167b) from Mus musculus (Mouse).